A 44-amino-acid chain; its full sequence is Putative protein PsbN (44 aa).

A helical membrane pass occupies residues 3–23; sequence IISFLSTIFLGFFIISTTIYS.

Belongs to the PsbN family.

The protein resides in the plastid. Its subcellular location is the chloroplast thylakoid membrane. May play a role in photosystem I and II biogenesis. This chain is Putative protein PsbN, found in Euglena gracilis.